The sequence spans 215 residues: Ras-related protein Rab-42 (215 aa).

The GTP site is built by G19, G21, K22, T23, and T44. T23, T44, and D68 together coordinate Mg(2+). Residues G71, K128, D130, A157, and K158 each coordinate GTP. The interval 196–215 (HRSPNPRSSSRKQDSGTCQC) is disordered. Residues C213 and C215 are each lipidated (S-geranylgeranyl cysteine).

It belongs to the small GTPase superfamily. Rab family. Mg(2+) is required as a cofactor.

The protein resides in the membrane. The catalysed reaction is GTP + H2O = GDP + phosphate + H(+). Regulated by guanine nucleotide exchange factors (GEFs) which promote the exchange of bound GDP for free GTP. Regulated by GTPase activating proteins (GAPs) which increase the GTP hydrolysis activity. Inhibited by GDP dissociation inhibitors (GDIs). Functionally, the small GTPases Rab are key regulators of intracellular membrane trafficking, from the formation of transport vesicles to their fusion with membranes. Rabs cycle between an inactive GDP-bound form and an active GTP-bound form that is able to recruit to membranes different sets of downstream effectors directly responsible for vesicle formation, movement, tethering and fusion. The physiological function of RAB42 remains undefined. This Mus musculus (Mouse) protein is Ras-related protein Rab-42.